Here is an 82-residue protein sequence, read N- to C-terminus: Small ribosomal subunit protein bS16 (82 aa).

The protein belongs to the bacterial ribosomal protein bS16 family.

In Francisella tularensis subsp. holarctica (strain FTNF002-00 / FTA), this protein is Small ribosomal subunit protein bS16.